The following is a 70-amino-acid chain: Conotoxin ba3a (70 aa).

Residues 1–20 (MLKIGVMLSIILVLFPLATL) form the signal peptide. Positions 21-55 (QLVAERPAAERYAENKQDLNPDERRNYLVDLGVER) are excised as a propeptide.

As to expression, expressed by the venom duct.

The protein localises to the secreted. This Conus bayani (Bayan's cone) protein is Conotoxin ba3a.